A 183-amino-acid polypeptide reads, in one-letter code: UPF0098 protein YbcL (183 aa).

Residues 1 to 21 form the signal peptide; that stretch reads MKTLIVSTVLAFITFSAQAAA. A disulfide bridge connects residues Cys46 and Cys129.

The protein belongs to the UPF0098 family. Homodimer.

The protein resides in the periplasm. This chain is UPF0098 protein YbcL (ybcL), found in Escherichia coli (strain K12).